We begin with the raw amino-acid sequence, 243 residues long: Carboxy-S-adenosyl-L-methionine synthase (243 aa).

S-adenosyl-L-methionine is bound by residues Tyr40, 65-67 (GCS), 90-91 (DN), 118-119 (DI), Asn133, and Arg200.

The protein belongs to the class I-like SAM-binding methyltransferase superfamily. Cx-SAM synthase family. As to quaternary structure, homodimer.

The catalysed reaction is prephenate + S-adenosyl-L-methionine = carboxy-S-adenosyl-L-methionine + 3-phenylpyruvate + H2O. In terms of biological role, catalyzes the conversion of S-adenosyl-L-methionine (SAM) to carboxy-S-adenosyl-L-methionine (Cx-SAM). This chain is Carboxy-S-adenosyl-L-methionine synthase, found in Shewanella halifaxensis (strain HAW-EB4).